Reading from the N-terminus, the 829-residue chain is Ent-cassa-12,15-diene synthase (829 aa).

The segment at Met-1–Asp-50 is disordered. A compositionally biased stretch (polar residues) spans Gly-23–Ser-37. The Mg(2+) site is built by Asp-576, Asp-580, Asn-720, and Glu-728. The short motif at Asp-576–Asp-580 is the DDXXD motif element.

This sequence belongs to the terpene synthase family. The cofactor is Mg(2+). In terms of tissue distribution, expressed in roots and stems.

The catalysed reaction is ent-copalyl diphosphate = ent-cassa-12,15-diene + diphosphate. In terms of biological role, involved in phytocassane phytoalexins biosynthesis. Catalyzes the conversion of ent-copalyl diphosphate to the phytoalexin precursor ent-cassa-12,15-diene. This chain is Ent-cassa-12,15-diene synthase (KSL7), found in Oryza sativa subsp. japonica (Rice).